The following is a 315-amino-acid chain: Olfactory receptor 4A5 (315 aa).

Over 1 to 23 the chain is Extracellular; the sequence is MRQNNNITEFVLLGFSQDPGVQK. Residue Asn6 is glycosylated (N-linked (GlcNAc...) asparagine). The helical transmembrane segment at 24–47 threads the bilayer; sequence ALFVMFLLTYLVTVVGNLLIVVDI. Over 48–55 the chain is Cytoplasmic; sequence IASPSLGS. The chain crosses the membrane as a helical span at residues 56-77; it reads PMYFFLACLSFIDAAYSTTISP. Over 78-98 the chain is Extracellular; sequence KLIVGLFCDKKTISFQGCMGQ. Cys95 and Cys186 are oxidised to a cystine. A helical transmembrane segment spans residues 99-118; that stretch reads LFIDHFFGGAEVFLLVVMAC. Topologically, residues 119-137 are cytoplasmic; the sequence is DRYVAICKPLHYLTIMNRQ. A helical membrane pass occupies residues 138–156; sequence VCFLLLVVAMIGGFVHSAF. The Extracellular portion of the chain corresponds to 157–192; it reads QIVVYSLPFCGPNVIVHFSCDMHPLLELACTDTYFI. A helical membrane pass occupies residues 193 to 216; the sequence is GLTVVVNSGAICMVIFNLLLISYG. Residues 217–232 are Cytoplasmic-facing; it reads VILSSLKTYSQEKRGK. Residues 233–255 form a helical membrane-spanning segment; sequence ALSTCSSGSTVVVLFFVPCIFIY. Residues 256–266 lie on the Extracellular side of the membrane; it reads VRPVSNFPTDK. Residues 267-286 traverse the membrane as a helical segment; sequence FMTVFYTIITHMLSPLIYTL. The Cytoplasmic segment spans residues 287 to 315; sequence RNSEMRNAIEKLLGKKLTIFIIGGVSVLM.

The protein belongs to the G-protein coupled receptor 1 family.

It localises to the cell membrane. In terms of biological role, odorant receptor. The chain is Olfactory receptor 4A5 (OR4A5) from Homo sapiens (Human).